An 858-amino-acid chain; its full sequence is Bifunctional uridylyltransferase/uridylyl-removing enzyme (858 aa).

A uridylyltransferase region spans residues 1-324 (MSASVAEPPP…PATSGVTRVL (324 aa)). The interval 325 to 681 (SPGRFVEKQG…ARPSPVGDAL (357 aa)) is uridylyl-removing. An HD domain is found at 443–565 (VDQHILMVLR…VGSERRLTAL (123 aa)). ACT domains are found at residues 682-761 (QVLV…PEPS) and 790-858 (ILSV…AIAV).

The protein belongs to the GlnD family. It depends on Mg(2+) as a cofactor.

It catalyses the reaction [protein-PII]-L-tyrosine + UTP = [protein-PII]-uridylyl-L-tyrosine + diphosphate. The enzyme catalyses [protein-PII]-uridylyl-L-tyrosine + H2O = [protein-PII]-L-tyrosine + UMP + H(+). With respect to regulation, uridylyltransferase (UTase) activity is inhibited by glutamine, while glutamine activates uridylyl-removing (UR) activity. In terms of biological role, modifies, by uridylylation and deuridylylation, the PII regulatory proteins (GlnB and homologs), in response to the nitrogen status of the cell that GlnD senses through the glutamine level. Under low glutamine levels, catalyzes the conversion of the PII proteins and UTP to PII-UMP and PPi, while under higher glutamine levels, GlnD hydrolyzes PII-UMP to PII and UMP (deuridylylation). Thus, controls uridylylation state and activity of the PII proteins, and plays an important role in the regulation of nitrogen assimilation and metabolism. The sequence is that of Bifunctional uridylyltransferase/uridylyl-removing enzyme from Burkholderia pseudomallei (strain 1106a).